The sequence spans 259 residues: Formate channel BtFdhC (259 aa).

Topologically, residues 1-26 (MAFHKPEQIAELVIEAGVQKVSQTLP) are cytoplasmic. Residues 27–47 (AMLILGFLGGAFISLGFLLNI) form a helical membrane-spanning segment. The Periplasmic portion of the chain corresponds to 48-66 (RVLGNLPERWGSLVNVLGG). A helical membrane pass occupies residues 67 to 97 (AVFPVGLMLVVLAGGELITGNMMSLSMALYA). Over 98–108 (KKITLVSVLNN) the chain is Cytoplasmic. Residues 109–130 (WVWITFMNFVGAIFVAYCFGHL) traverse the membrane as a helical segment. At 131-157 (GGLTEGDYLNKTVAIAEGKLHESFGRT) the chain is on the periplasmic side. Residues 158-176 (LILAIGCNWLVCLALWLAY) traverse the membrane as a helical segment. The Cytoplasmic portion of the chain corresponds to 177 to 187 (GTSDFVGKIIG). A helical membrane pass occupies residues 188–216 (IWIPIMAFVVIGFQQVVANMFVISAVIFA). At 217-227 (GHLTWMDLARN) the chain is on the periplasmic side. The helical transmembrane segment at 228–250 (FVPVFIGNVIGGAGFVGFAYFAC) threads the bilayer. Over 251 to 259 (YQKQHSNMK) the chain is Cytoplasmic.

Belongs to the FNT transporter (TC 1.A.16) family.

The protein localises to the cell inner membrane. It carries out the reaction formate(in) = formate(out). In terms of biological role, acts as a formate transporter. This is Formate channel BtFdhC from Bacillus thuringiensis.